A 604-amino-acid chain; its full sequence is Acetylcholinesterase 4 (604 aa).

A signal peptide spans 1–23 (MKPKLVFLPFLIFITVFIEESEA). Cys88 and Cys115 are disulfide-bonded. 2 N-linked (GlcNAc...) asparagine glycosylation sites follow: Asn96 and Asn128. Catalysis depends on Ser219, which acts as the Acyl-ester intermediate. The cysteines at positions 273 and 284 are disulfide-linked. Residues Asn274 and Asn299 are each glycosylated (N-linked (GlcNAc...) asparagine). Catalysis depends on Glu347, which acts as the Charge relay system. N-linked (GlcNAc...) asparagine glycans are attached at residues Asn400 and Asn446. The cysteines at positions 426 and 561 are disulfide-linked. The active-site Charge relay system is the His477.

Belongs to the type-B carboxylesterase/lipase family.

The protein resides in the synapse. It localises to the secreted. The protein localises to the cell membrane. The catalysed reaction is acetylcholine + H2O = choline + acetate + H(+). In terms of biological role, rapidly hydrolyzes choline released into the synapse. This Caenorhabditis briggsae protein is Acetylcholinesterase 4 (ace-4).